A 289-amino-acid chain; its full sequence is UTP--glucose-1-phosphate uridylyltransferase 2 (289 aa).

This sequence belongs to the UDPGP type 2 family.

The enzyme catalyses alpha-D-glucose 1-phosphate + UTP + H(+) = UDP-alpha-D-glucose + diphosphate. Its pathway is glycolipid metabolism; diglucosyl-diacylglycerol biosynthesis. Its function is as follows. Catalyzes the formation of UDP-glucose from glucose-1-phosphate and UTP. This is an intermediate step in the biosynthesis of diglucosyl-diacylglycerol (Glc2-DAG), i.e. a glycolipid found in the membrane, which is also used as a membrane anchor for lipoteichoic acid (LTA). The sequence is that of UTP--glucose-1-phosphate uridylyltransferase 2 (gtaB2) from Staphylococcus saprophyticus subsp. saprophyticus (strain ATCC 15305 / DSM 20229 / NCIMB 8711 / NCTC 7292 / S-41).